A 447-amino-acid polypeptide reads, in one-letter code: Tol-Pal system protein TolB (447 aa).

Residues 1–29 (MITMSRIRSLAAFAVFVILGVAAVLPAQA) form the signal peptide.

This sequence belongs to the TolB family. In terms of assembly, the Tol-Pal system is composed of five core proteins: the inner membrane proteins TolA, TolQ and TolR, the periplasmic protein TolB and the outer membrane protein Pal. They form a network linking the inner and outer membranes and the peptidoglycan layer.

Its subcellular location is the periplasm. Part of the Tol-Pal system, which plays a role in outer membrane invagination during cell division and is important for maintaining outer membrane integrity. This chain is Tol-Pal system protein TolB, found in Paramagnetospirillum magneticum (strain ATCC 700264 / AMB-1) (Magnetospirillum magneticum).